The following is a 459-amino-acid chain: Exodeoxyribonuclease 7 large subunit (459 aa).

This sequence belongs to the XseA family. As to quaternary structure, heterooligomer composed of large and small subunits.

The protein resides in the cytoplasm. The catalysed reaction is Exonucleolytic cleavage in either 5'- to 3'- or 3'- to 5'-direction to yield nucleoside 5'-phosphates.. Bidirectionally degrades single-stranded DNA into large acid-insoluble oligonucleotides, which are then degraded further into small acid-soluble oligonucleotides. The polypeptide is Exodeoxyribonuclease 7 large subunit (Yersinia pestis bv. Antiqua (strain Antiqua)).